The primary structure comprises 69 residues: uncharacterized protein (69 aa).

This is an uncharacterized protein from Escherichia coli O6:H1 (strain CFT073 / ATCC 700928 / UPEC).